The primary structure comprises 427 residues: Serine--tRNA ligase (427 aa).

233–235 (TGE) provides a ligand contact to L-serine. 264–266 (RSE) provides a ligand contact to ATP. Position 287 (Glu287) interacts with L-serine. 351 to 354 (EVSS) provides a ligand contact to ATP. Position 387 (Ser387) interacts with L-serine.

The protein belongs to the class-II aminoacyl-tRNA synthetase family. Type-1 seryl-tRNA synthetase subfamily. Homodimer. The tRNA molecule binds across the dimer.

It is found in the cytoplasm. It carries out the reaction tRNA(Ser) + L-serine + ATP = L-seryl-tRNA(Ser) + AMP + diphosphate + H(+). It catalyses the reaction tRNA(Sec) + L-serine + ATP = L-seryl-tRNA(Sec) + AMP + diphosphate + H(+). It participates in aminoacyl-tRNA biosynthesis; selenocysteinyl-tRNA(Sec) biosynthesis; L-seryl-tRNA(Sec) from L-serine and tRNA(Sec): step 1/1. Catalyzes the attachment of serine to tRNA(Ser). Is also able to aminoacylate tRNA(Sec) with serine, to form the misacylated tRNA L-seryl-tRNA(Sec), which will be further converted into selenocysteinyl-tRNA(Sec). The protein is Serine--tRNA ligase of Buchnera aphidicola subsp. Acyrthosiphon pisum (strain 5A).